We begin with the raw amino-acid sequence, 413 residues long: Zinc finger protein 821 (413 aa).

Residues 26 to 83 form a disordered region; that stretch reads RQAMMKTDFPGDLGSQRQAIQQLRDQDSSSSDSEGDEEETTQDEVSSHTSEEDGGVVK. Positions 58-67 are enriched in acidic residues; it reads SEGDEEETTQ. 2 consecutive C2H2-type zinc fingers follow at residues 117-141 and 151-173; these read QLCQ…VYQH and YMCP…LLIH. A coiled-coil region spans residues 260-367; the sequence is ALRRQNEPLE…EKMDMMLRAQ (108 aa). The tract at residues 279 to 320 is disordered; the sequence is RTAKKSRRDNETPEEREVRRMRDREAKRLQRMQETDEQRARR.

Belongs to the krueppel C2H2-type zinc-finger protein family.

It localises to the nucleus. May be involved in transcriptional regulation. The protein is Zinc finger protein 821 (Znf821) of Mus musculus (Mouse).